We begin with the raw amino-acid sequence, 288 residues long: G1/S-specific cyclin-D2 (288 aa).

A Cyclin N-terminal domain is found at 26 to 151; the sequence is LQNLLTIEER…VLGKLKWNLA (126 aa). The interval 264-288 is disordered; that stretch reads QHNGSKSVEDPDQATTPTDVRDVDL. At S270 the chain carries Phosphoserine. T279 is subject to Phosphothreonine.

This sequence belongs to the cyclin family. Cyclin D subfamily. In terms of assembly, interacts with either CDK4 or CDK6 protein kinase to form a serine/threonine kinase holoenzyme complex. The cyclin subunit imparts substrate specificity to the complex. In terms of processing, phosphorylation at Thr-279 by MAP kinases is required for ubiquitination and degradation by the DCX(AMBRA1) complex. Post-translationally, ubiquitinated by the DCX(AMBRA1) complex during the transition from G1 to S cell phase, leading to its degradation: ubiquitination is dependent on Thr-279 phosphorylation. The DCX(AMBRA1) complex represents the major regulator of CCND2 stability during the G1/S transition. Polyubiquitinated by the SCF(FBXL2) complex, leading to proteasomal degradation.

It is found in the nucleus. The protein localises to the cytoplasm. The protein resides in the nucleus membrane. Regulatory component of the cyclin D2-CDK4 (DC) complex that phosphorylates and inhibits members of the retinoblastoma (RB) protein family including RB1 and regulates the cell-cycle during G(1)/S transition. Phosphorylation of RB1 allows dissociation of the transcription factor E2F from the RB/E2F complex and the subsequent transcription of E2F target genes which are responsible for the progression through the G(1) phase. Hypophosphorylates RB1 in early G(1) phase. Cyclin D-CDK4 complexes are major integrators of various mitogenenic and antimitogenic signals. In Rattus norvegicus (Rat), this protein is G1/S-specific cyclin-D2 (Ccnd2).